Here is a 428-residue protein sequence, read N- to C-terminus: Serine--tRNA ligase (428 aa).

Residue 235 to 237 (TAE) participates in L-serine binding. 266 to 268 (RSE) lines the ATP pocket. Glu-289 provides a ligand contact to L-serine. 353 to 356 (EISS) is an ATP binding site. Residue Ser-389 participates in L-serine binding.

The protein belongs to the class-II aminoacyl-tRNA synthetase family. Type-1 seryl-tRNA synthetase subfamily. As to quaternary structure, homodimer. The tRNA molecule binds across the dimer.

The protein resides in the cytoplasm. The enzyme catalyses tRNA(Ser) + L-serine + ATP = L-seryl-tRNA(Ser) + AMP + diphosphate + H(+). It catalyses the reaction tRNA(Sec) + L-serine + ATP = L-seryl-tRNA(Sec) + AMP + diphosphate + H(+). Its pathway is aminoacyl-tRNA biosynthesis; selenocysteinyl-tRNA(Sec) biosynthesis; L-seryl-tRNA(Sec) from L-serine and tRNA(Sec): step 1/1. Functionally, catalyzes the attachment of serine to tRNA(Ser). Is also able to aminoacylate tRNA(Sec) with serine, to form the misacylated tRNA L-seryl-tRNA(Sec), which will be further converted into selenocysteinyl-tRNA(Sec). This is Serine--tRNA ligase from Shewanella loihica (strain ATCC BAA-1088 / PV-4).